The sequence spans 618 residues: MNLLDKLNFPEDLKKLNEEDYKVLSSEIRKFLIDSVSKTGGHLASNLGVVELTLSLFKAFSFDKDKIVWDVGHQSYIYKILTGRKEGFKKLRKYDGISGFPKRNESKYDYFDTGHSSTSISAALGIARARDLKKEKYNVISVIGDGALTGGMAIEALNDVGFRKTKLIIILNDNQMSISTNVGGLSRYLNKLRIAPVYNKLKTDIHASLDNSNLGKNIAGKISKVKDSIKQLIVPSMFFENMGVKYIGPIDGHDIDAMTEVFIKAKEINEPVIIHILTQKGKGYALAEESPSKYHAVGAFNLESGESNASPKNSYSKAFGKALVNLGAQDEKIVAITAAMPEGTGLKCFSQKFRDRFFDVGIAEEHAVTLAAGMASNGLKPVFAVYSTFLQRAFDQVLHDVCIQNLPVVFAIDRAGIVGEDGETHQGINDLSYLSMIPNIHIVVPKCLEEVDVLLKWAINKNAPVAIRYPKGGNIIDTLSPIKEVVEGQWEIVNRGSKVCIIATGRMVQHAMIAKEFLYEKGLNPTVINATFVKPIDKKLLENIKKEGYNILTIEDNIIKGGLGSAVKDYLSEIDYKGTIRSLGYDDEFIPQGNVEILYKTYKLDYENISKIVMKLYD.

Thiamine diphosphate contacts are provided by residues His-73 and 114-116; that span reads GHS. Asp-145 is a binding site for Mg(2+). Thiamine diphosphate-binding positions include 146–147, Asn-174, Tyr-284, and Glu-364; that span reads GA. Asn-174 serves as a coordination point for Mg(2+).

The protein belongs to the transketolase family. DXPS subfamily. Homodimer. It depends on Mg(2+) as a cofactor. Requires thiamine diphosphate as cofactor.

It carries out the reaction D-glyceraldehyde 3-phosphate + pyruvate + H(+) = 1-deoxy-D-xylulose 5-phosphate + CO2. It participates in metabolic intermediate biosynthesis; 1-deoxy-D-xylulose 5-phosphate biosynthesis; 1-deoxy-D-xylulose 5-phosphate from D-glyceraldehyde 3-phosphate and pyruvate: step 1/1. Its function is as follows. Catalyzes the acyloin condensation reaction between C atoms 2 and 3 of pyruvate and glyceraldehyde 3-phosphate to yield 1-deoxy-D-xylulose-5-phosphate (DXP). This chain is 1-deoxy-D-xylulose-5-phosphate synthase, found in Clostridium beijerinckii (strain ATCC 51743 / NCIMB 8052) (Clostridium acetobutylicum).